A 232-amino-acid polypeptide reads, in one-letter code: Polycomb group RING finger protein 5-B (232 aa).

The RING-type zinc-finger motif lies at 18–57; it reads CFVCKGYLIKPTTVTECLHTFCKSCIVQHFEDSNDCPKCG. Residues 93–104 are compositionally biased toward basic and acidic residues; sequence QEDEFWRRKESN. Residues 93-128 are disordered; it reads QEDEFWRRKESNDENGPMCKKRRVDEEDDDKGDGDY.

As to quaternary structure, component of a PRC1-like complex.

The protein resides in the nucleus. Component of Polycomb group (PcG) multiprotein complexes; the complex class is required to maintain the transcriptionally repressive state of some genes. This is Polycomb group RING finger protein 5-B (pcgf5b) from Danio rerio (Zebrafish).